The sequence spans 89 residues: Small ribosomal subunit protein uS15 (89 aa).

The protein belongs to the universal ribosomal protein uS15 family. As to quaternary structure, part of the 30S ribosomal subunit. Forms a bridge to the 50S subunit in the 70S ribosome, contacting the 23S rRNA.

One of the primary rRNA binding proteins, it binds directly to 16S rRNA where it helps nucleate assembly of the platform of the 30S subunit by binding and bridging several RNA helices of the 16S rRNA. Its function is as follows. Forms an intersubunit bridge (bridge B4) with the 23S rRNA of the 50S subunit in the ribosome. This is Small ribosomal subunit protein uS15 from Photobacterium profundum (strain SS9).